The chain runs to 140 residues: Putative pre-16S rRNA nuclease (140 aa).

The protein belongs to the YqgF nuclease family.

Its subcellular location is the cytoplasm. Functionally, could be a nuclease involved in processing of the 5'-end of pre-16S rRNA. The protein is Putative pre-16S rRNA nuclease of Chlorobium chlorochromatii (strain CaD3).